The chain runs to 259 residues: Ribosomal RNA small subunit methyltransferase A (259 aa).

Residues Asn-13, Thr-15, Gly-40, Glu-61, Asp-85, and Asn-105 each contribute to the S-adenosyl-L-methionine site.

Belongs to the class I-like SAM-binding methyltransferase superfamily. rRNA adenine N(6)-methyltransferase family. RsmA subfamily.

It is found in the cytoplasm. It catalyses the reaction adenosine(1518)/adenosine(1519) in 16S rRNA + 4 S-adenosyl-L-methionine = N(6)-dimethyladenosine(1518)/N(6)-dimethyladenosine(1519) in 16S rRNA + 4 S-adenosyl-L-homocysteine + 4 H(+). Specifically dimethylates two adjacent adenosines (A1518 and A1519) in the loop of a conserved hairpin near the 3'-end of 16S rRNA in the 30S particle. May play a critical role in biogenesis of 30S subunits. The protein is Ribosomal RNA small subunit methyltransferase A of Mycoplasma genitalium (strain ATCC 33530 / DSM 19775 / NCTC 10195 / G37) (Mycoplasmoides genitalium).